Reading from the N-terminus, the 161-residue chain is Cyclic pyranopterin monophosphate synthase (161 aa).

Substrate contacts are provided by residues 75–77 (LCH) and 113–114 (ME). Residue Asp-128 is part of the active site.

Belongs to the MoaC family. As to quaternary structure, homohexamer; trimer of dimers.

The enzyme catalyses (8S)-3',8-cyclo-7,8-dihydroguanosine 5'-triphosphate = cyclic pyranopterin phosphate + diphosphate. Its pathway is cofactor biosynthesis; molybdopterin biosynthesis. Functionally, catalyzes the conversion of (8S)-3',8-cyclo-7,8-dihydroguanosine 5'-triphosphate to cyclic pyranopterin monophosphate (cPMP). The polypeptide is Cyclic pyranopterin monophosphate synthase (Erwinia tasmaniensis (strain DSM 17950 / CFBP 7177 / CIP 109463 / NCPPB 4357 / Et1/99)).